A 411-amino-acid chain; its full sequence is Zinc metalloproteinase/disintegrin (411 aa).

A signal peptide spans 1-20 (MIEVLLVTICLAVFPYQGSS). The propeptide occupies 21-190 (IILESGNVND…KASQLYLTPE (170 aa)). In terms of domain architecture, Peptidase M12B spans 197–395 (RYVKLAIVVD…SKPQCILNAP (199 aa)). Residue D284 participates in Ca(2+) binding. 3 disulfide bridges follow: C308–C390, C352–C374, and C354–C357. H333 provides a ligand contact to Zn(2+). E334 is a catalytic residue. 2 residues coordinate Zn(2+): H337 and H343. C390 and N393 together coordinate Ca(2+). A propeptide spanning residues 396-411 (LRTDTVSTPVSGNEPL) is cleaved from the precursor.

It belongs to the venom metalloproteinase (M12B) family. P-II subfamily. Monomer. It depends on Zn(2+) as a cofactor. As to expression, expressed by the venom gland.

It localises to the secreted. In terms of biological role, snake venom metalloproteinase that impairs hemostasis in the envenomed animal. This chain is Zinc metalloproteinase/disintegrin, found in Protobothrops mucrosquamatus (Taiwan habu).